The sequence spans 501 residues: L-arabinose isomerase (501 aa).

Glu306, Glu333, His350, and His449 together coordinate Mn(2+).

Belongs to the arabinose isomerase family. It depends on Mn(2+) as a cofactor.

It catalyses the reaction beta-L-arabinopyranose = L-ribulose. Its pathway is carbohydrate degradation; L-arabinose degradation via L-ribulose; D-xylulose 5-phosphate from L-arabinose (bacterial route): step 1/3. Its function is as follows. Catalyzes the conversion of L-arabinose to L-ribulose. This is L-arabinose isomerase from Herpetosiphon aurantiacus (strain ATCC 23779 / DSM 785 / 114-95).